Consider the following 111-residue polypeptide: Large ribosomal subunit protein uL22 (111 aa).

This sequence belongs to the universal ribosomal protein uL22 family. In terms of assembly, part of the 50S ribosomal subunit.

This protein binds specifically to 23S rRNA; its binding is stimulated by other ribosomal proteins, e.g. L4, L17, and L20. It is important during the early stages of 50S assembly. It makes multiple contacts with different domains of the 23S rRNA in the assembled 50S subunit and ribosome. In terms of biological role, the globular domain of the protein is located near the polypeptide exit tunnel on the outside of the subunit, while an extended beta-hairpin is found that lines the wall of the exit tunnel in the center of the 70S ribosome. This is Large ribosomal subunit protein uL22 from Clostridium novyi (strain NT).